A 290-amino-acid chain; its full sequence is ATP synthase gamma chain (290 aa).

This sequence belongs to the ATPase gamma chain family. As to quaternary structure, F-type ATPases have 2 components, CF(1) - the catalytic core - and CF(0) - the membrane proton channel. CF(1) has five subunits: alpha(3), beta(3), gamma(1), delta(1), epsilon(1). CF(0) has four main subunits: a, b, b' and c.

It localises to the cellular chromatophore membrane. Produces ATP from ADP in the presence of a proton gradient across the membrane. The gamma chain is believed to be important in regulating ATPase activity and the flow of protons through the CF(0) complex. The chain is ATP synthase gamma chain from Rhodobacter capsulatus (Rhodopseudomonas capsulata).